The following is a 201-amino-acid chain: MLPLLKKLYLTFARSSRIIITLVIIDQLSKWWFIDNLRWKSGLMLKVTSFLNMVYTWNYGISFGLMREYYQYSNAIFLITNTIIVCYLYYLMIRSKTIGSFAGYSFVIGGAVGNLIDRFFRGAVFDFIHFHYQNYSFPVFNLADCFIIIGVIILIEDYYSTKKVIEEKAKGNYDNAQIEAMAEKIRNTDKGGNDKIASLQN.

Helical transmembrane passes span 73-93 (SNAI…YLMI) and 97-117 (TIGS…NLID). Catalysis depends on residues D126 and D144. A helical transmembrane segment spans residues 135–155 (YSFPVFNLADCFIIIGVIILI).

Belongs to the peptidase A8 family.

It is found in the cell inner membrane. It carries out the reaction Release of signal peptides from bacterial membrane prolipoproteins. Hydrolyzes -Xaa-Yaa-Zaa-|-(S,diacylglyceryl)Cys-, in which Xaa is hydrophobic (preferably Leu), and Yaa (Ala or Ser) and Zaa (Gly or Ala) have small, neutral side chains.. It participates in protein modification; lipoprotein biosynthesis (signal peptide cleavage). This protein specifically catalyzes the removal of signal peptides from prolipoproteins. This Rickettsia conorii (strain ATCC VR-613 / Malish 7) protein is Lipoprotein signal peptidase.